A 142-amino-acid polypeptide reads, in one-letter code: Gonadotropin subunit beta-2 (142 aa).

The N-terminal stretch at 1 to 23 is a signal peptide; sequence MLGLHVGTLISLFLCILLEPVEG. Disulfide bonds link Cys29/Cys77, Cys43/Cys92, Cys46/Cys130, Cys54/Cys108, Cys58/Cys110, and Cys113/Cys120. Residue Asn33 is glycosylated (N-linked (GlcNAc...) asparagine).

It belongs to the glycoprotein hormones subunit beta family. In terms of assembly, heterodimer of an alpha and a beta chain.

Its subcellular location is the secreted. Functionally, involved in gametogenesis and steroidogenesis. The chain is Gonadotropin subunit beta-2 (cgbb) from Oncorhynchus keta (Chum salmon).